The primary structure comprises 692 residues: Elongation factor G (692 aa).

The tr-type G domain maps to 8–282 (ENTRNIGIMA…AVLDYLPSPL (275 aa)). GTP is bound by residues 17-24 (AHIDAGKT), 81-85 (DTPGH), and 135-138 (NKMD).

This sequence belongs to the TRAFAC class translation factor GTPase superfamily. Classic translation factor GTPase family. EF-G/EF-2 subfamily.

Its subcellular location is the cytoplasm. Catalyzes the GTP-dependent ribosomal translocation step during translation elongation. During this step, the ribosome changes from the pre-translocational (PRE) to the post-translocational (POST) state as the newly formed A-site-bound peptidyl-tRNA and P-site-bound deacylated tRNA move to the P and E sites, respectively. Catalyzes the coordinated movement of the two tRNA molecules, the mRNA and conformational changes in the ribosome. The sequence is that of Elongation factor G (fusA) from Halalkalibacterium halodurans (strain ATCC BAA-125 / DSM 18197 / FERM 7344 / JCM 9153 / C-125) (Bacillus halodurans).